The sequence spans 196 residues: Nucleoside triphosphate pyrophosphatase (196 aa).

D70 serves as the catalytic Proton acceptor.

It belongs to the Maf family. Requires a divalent metal cation as cofactor.

The protein localises to the cytoplasm. It catalyses the reaction a ribonucleoside 5'-triphosphate + H2O = a ribonucleoside 5'-phosphate + diphosphate + H(+). It carries out the reaction a 2'-deoxyribonucleoside 5'-triphosphate + H2O = a 2'-deoxyribonucleoside 5'-phosphate + diphosphate + H(+). Nucleoside triphosphate pyrophosphatase. May have a dual role in cell division arrest and in preventing the incorporation of modified nucleotides into cellular nucleic acids. The sequence is that of Nucleoside triphosphate pyrophosphatase from Gloeothece citriformis (strain PCC 7424) (Cyanothece sp. (strain PCC 7424)).